Here is a 115-residue protein sequence, read N- to C-terminus: Parathyroid hormone (115 aa).

Positions 1 to 25 (MMSAKDTVKVMVVMLAICFLARSDG) are cleaved as a signal peptide. The propeptide occupies 26–31 (KPIKKR). The important for receptor binding stretch occupies residues 51–69 (RVEWLRKKLQDVHNFVALG). The disordered stretch occupies residues 75 to 98 (RDGGSQRPRKKEDNVLVESHQKSL).

Belongs to the parathyroid hormone family. In terms of assembly, interacts with PTH1R (via N-terminal extracellular domain).

The protein resides in the secreted. Its function is as follows. Parathyroid hormone elevates calcium level by dissolving the salts in bone and preventing their renal excretion. Acts by binding to its receptor, PTH1R, activating G protein-coupled receptor signaling. Stimulates [1-14C]-2-deoxy-D-glucose (2DG) transport and glycogen synthesis in osteoblastic cells. In Sus scrofa (Pig), this protein is Parathyroid hormone (PTH).